Reading from the N-terminus, the 179-residue chain is ATP synthase subunit delta (179 aa).

This sequence belongs to the ATPase delta chain family. As to quaternary structure, F-type ATPases have 2 components, F(1) - the catalytic core - and F(0) - the membrane proton channel. F(1) has five subunits: alpha(3), beta(3), gamma(1), delta(1), epsilon(1). F(0) has three main subunits: a(1), b(2) and c(10-14). The alpha and beta chains form an alternating ring which encloses part of the gamma chain. F(1) is attached to F(0) by a central stalk formed by the gamma and epsilon chains, while a peripheral stalk is formed by the delta and b chains.

Its subcellular location is the cell inner membrane. F(1)F(0) ATP synthase produces ATP from ADP in the presence of a proton or sodium gradient. F-type ATPases consist of two structural domains, F(1) containing the extramembraneous catalytic core and F(0) containing the membrane proton channel, linked together by a central stalk and a peripheral stalk. During catalysis, ATP synthesis in the catalytic domain of F(1) is coupled via a rotary mechanism of the central stalk subunits to proton translocation. Functionally, this protein is part of the stalk that links CF(0) to CF(1). It either transmits conformational changes from CF(0) to CF(1) or is implicated in proton conduction. The polypeptide is ATP synthase subunit delta (Chlorobium chlorochromatii (strain CaD3)).